The chain runs to 67 residues: Small ribosomal subunit protein bS21 (67 aa).

It belongs to the bacterial ribosomal protein bS21 family.

The chain is Small ribosomal subunit protein bS21 from Granulibacter bethesdensis (strain ATCC BAA-1260 / CGDNIH1).